The sequence spans 637 residues: Phosphomethylpyrimidine synthase (637 aa).

Residues Asn-242, Met-271, Tyr-300, His-336, 356-358 (SRG), 397-400 (DGLR), and Glu-436 each bind substrate. Zn(2+) is bound at residue His-440. Position 463 (Tyr-463) interacts with substrate. Position 504 (His-504) interacts with Zn(2+). Residues Cys-584, Cys-587, and Cys-592 each coordinate [4Fe-4S] cluster.

This sequence belongs to the ThiC family. In terms of assembly, homodimer. [4Fe-4S] cluster serves as cofactor.

It carries out the reaction 5-amino-1-(5-phospho-beta-D-ribosyl)imidazole + S-adenosyl-L-methionine = 4-amino-2-methyl-5-(phosphooxymethyl)pyrimidine + CO + 5'-deoxyadenosine + formate + L-methionine + 3 H(+). Its pathway is cofactor biosynthesis; thiamine diphosphate biosynthesis. Functionally, catalyzes the synthesis of the hydroxymethylpyrimidine phosphate (HMP-P) moiety of thiamine from aminoimidazole ribotide (AIR) in a radical S-adenosyl-L-methionine (SAM)-dependent reaction. The chain is Phosphomethylpyrimidine synthase from Herminiimonas arsenicoxydans.